The chain runs to 367 residues: Serine/threonine-protein kinase-transforming protein Rmil (367 aa).

The disordered stretch occupies residues 1-64 (EGGSTAGLSA…DSSDDWEIPD (64 aa)). Residues 33 to 57 (QRERKSSSSSEDRNRMKTLGRRDSS) are compositionally biased toward basic and acidic residues. Positions 67–327 (ITVGQRIGSG…PQILASIELL (261 aa)) constitute a Protein kinase domain. Residues 73–81 (IGSGSFGTV) and K93 each bind ATP. Residue D186 is the Proton acceptor of the active site.

It belongs to the protein kinase superfamily. TKL Ser/Thr protein kinase family. RAF subfamily.

It carries out the reaction L-seryl-[protein] + ATP = O-phospho-L-seryl-[protein] + ADP + H(+). It catalyses the reaction L-threonyl-[protein] + ATP = O-phospho-L-threonyl-[protein] + ADP + H(+). In Avian retrovirus IC10, this protein is Serine/threonine-protein kinase-transforming protein Rmil (V-RMIL).